Here is a 186-residue protein sequence, read N- to C-terminus: Elongation factor P (186 aa).

This sequence belongs to the elongation factor P family.

The protein localises to the cytoplasm. The protein operates within protein biosynthesis; polypeptide chain elongation. Its function is as follows. Involved in peptide bond synthesis. Stimulates efficient translation and peptide-bond synthesis on native or reconstituted 70S ribosomes in vitro. Probably functions indirectly by altering the affinity of the ribosome for aminoacyl-tRNA, thus increasing their reactivity as acceptors for peptidyl transferase. This is Elongation factor P from Cupriavidus necator (strain ATCC 17699 / DSM 428 / KCTC 22496 / NCIMB 10442 / H16 / Stanier 337) (Ralstonia eutropha).